Consider the following 78-residue polypeptide: Protein M6 (78 aa).

The protein belongs to the A9/FIL1 family. As to expression, tapetum of anthers.

It is found in the secreted. The polypeptide is Protein M6 (M6) (Lilium henryi (Henry's lily)).